A 256-amino-acid chain; its full sequence is Floral homeotic protein APETALA 1 (256 aa).

The MADS-box domain maps to 1–61 (MGRGRVQLKR…GKLFEYSTDS (61 aa)). Residues 88-178 (NTNWSMEYNR…SKQIKEREKV (91 aa)) enclose the K-box domain. The interval 180–206 (RAQQEQWDQQNHGQNMPPPPPPQEHQI) is disordered.

As to quaternary structure, homodimer capable of binding to CArG-box sequences.

The protein resides in the nucleus. Its function is as follows. Transcription factor that promotes early floral meristem identity in synergy with LEAFY. Displays a redundant function with CAULIFLOWER in the up-regulation of LEAFY. Required subsequently for the transition of an inflorescence meristem into a floral meristem, and for the normal development of sepals and petals in flowers. Regulates positively B class homeotic proteins. In Brassica rapa subsp. pekinensis (Chinese cabbage), this protein is Floral homeotic protein APETALA 1 (AP1).